Consider the following 119-residue polypeptide: Large ribosomal subunit protein bL20 (119 aa).

This sequence belongs to the bacterial ribosomal protein bL20 family.

In terms of biological role, binds directly to 23S ribosomal RNA and is necessary for the in vitro assembly process of the 50S ribosomal subunit. It is not involved in the protein synthesizing functions of that subunit. The chain is Large ribosomal subunit protein bL20 from Xanthomonas campestris pv. campestris (strain 8004).